Reading from the N-terminus, the 610-residue chain is MGAEGGGRRRALRLGAYVGCGAVLLTGCASMPDSGDLRGVESTPRQDAQVRVFAMPPREDAAPAEIVQGFLEALTSDDPQYETAREYLTGDASKQWRPYKSTTVLADGPNPEPERTRNRETGDDFAYTLTGSRLAKVDGQHAYAPDSGDYTGTVHLTLQRKTGQWRIDALPQGVVMGKSDFERNYKSVNKYYFASNVPAGTSGQLGTVADPVYVRGKVDPVTAMVTELLKGPTRWLAPVARSSFPTDTGLKKGVTSLAPDDQNKLTVPLNKKADRVGRAQCTKMAAQLLFTLKDLTPTGVDEVELQRSDGSTLCDLGEAEAESIASHGTGKSGEYEYFIDGEQRLVRLSGSSNGKDPDPVPGALGEGAKKLRAAAVSRDEVTAAGVSFDGSSLYVGSLVSGASLGEAVVHSAGTTEKDRLTTPSWDGGGDLWVADRDPAKSRLLLLQKGSGEPLEVRTPRLDGRIDAVRVAADGVRIALIVERDGKTSLQIGRIERETKADERADVSILELHSVTPQLEEVTAMSWAGDSRLVVVGREKGGVQQMRYVQVDGSTPSGSAPASLTGVQQIAASEDERLPLVAYSEDGIVRLSSGAQWQKVMKEGTAPVYPG.

The signal sequence occupies residues 1-27; it reads MGAEGGGRRRALRLGAYVGCGAVLLTG. Cysteine 28 is lipidated: N-palmitoyl cysteine. Residue cysteine 28 is the site of S-diacylglycerol cysteine attachment.

It belongs to the LpqB lipoprotein family.

The protein resides in the cell membrane. The polypeptide is Lipoprotein LpqB (Streptomyces avermitilis (strain ATCC 31267 / DSM 46492 / JCM 5070 / NBRC 14893 / NCIMB 12804 / NRRL 8165 / MA-4680)).